The following is a 484-amino-acid chain: MGSNDLINEAYDDSEVVGEERESKSAWMKRWYQLLTSPLDLQLVINEKLEMINWDAYAKSLAKPLGNFLTILFFIIRLLQDNLIKPNYYKLNVKSGAFDLSKSNKLKEFDYLWEISSSFQNSNQFYAFQSWYFVTLRFLNNLFRFTIFILLSLNLYVSCKFMFGYFKTYNLFHLKKEFNSPNLTKHNLKDLSKEYYEDIYKQSLWSMLKHFFRGSRDDGPHVNQNEVEIFFQLRKWIPTNFMINLFVSFSPTAIVFLSFSDVSFTSAIAIVFHQYILDYIITKRFQRSVDDDLILSSAALQEYEDKHIMVRINQCSNIDTLSSAMGTRSKTPRIFTTHSLCGEEIREVYNYEKREFEALPKMTESVPGSRETRIKDYGGISQVSDNQSHPIGFHYSPRMSPYYRDKVLDNNLAQSSSNENLEKGGAFLPNQDQNRPSKSLSPLRKTPLSARQKRFEGSEFNVLNKNDINSILRSPKKKKNYHKR.

S3 carries the phosphoserine modification. 2 consecutive transmembrane segments (helical) span residues 145 to 165 and 252 to 272; these read FTIFILLSLNLYVSCKFMFGY and TAIVFLSFSDVSFTSAIAIVF. Positions 416–457 are disordered; it reads SSNENLEKGGAFLPNQDQNRPSKSLSPLRKTPLSARQKRFEG. The residue at position 417 (S417) is a Phosphoserine. A compositionally biased stretch (polar residues) spans 430-440; sequence NQDQNRPSKSL. A Phosphoserine modification is found at S474.

The protein belongs to the NUR1 family. In terms of assembly, interacts with CSM1.

It is found in the nucleus membrane. Its function is as follows. Member of a perinuclear network that controls recombination at multiple loci to maintain genome stability. Required for rDNA repeat stability. The chain is Nuclear rim protein 1 (NUR1) from Saccharomyces cerevisiae (strain Lalvin EC1118 / Prise de mousse) (Baker's yeast).